The chain runs to 139 residues: TDP-4-oxo-6-deoxy-alpha-D-glucose-3,4-oxoisomerase (139 aa).

His49 acts as the Proton acceptor in catalysis.

As to quaternary structure, homodimer.

The catalysed reaction is dTDP-4-dehydro-6-deoxy-alpha-D-glucose = dTDP-3-dehydro-6-deoxy-alpha-D-galactose. In terms of biological role, mediates the isomerization of dTDP-6-deoxy-D-xylohex-4-ulose into dTDP-6-deoxy-D-xylohex-3-ulose in the biosynthesis of dTDP-3-acetamido-3,6-dideoxy-alpha-D-galactose, a glycan chain of the S-layer. The protein is TDP-4-oxo-6-deoxy-alpha-D-glucose-3,4-oxoisomerase (fdtA) of Aneurinibacillus thermoaerophilus.